We begin with the raw amino-acid sequence, 240 residues long: Putative N-acetylmannosamine-6-phosphate 2-epimerase (240 aa).

The protein belongs to the NanE family.

It carries out the reaction an N-acyl-D-glucosamine 6-phosphate = an N-acyl-D-mannosamine 6-phosphate. The protein operates within amino-sugar metabolism; N-acetylneuraminate degradation; D-fructose 6-phosphate from N-acetylneuraminate: step 3/5. Functionally, converts N-acetylmannosamine-6-phosphate (ManNAc-6-P) to N-acetylglucosamine-6-phosphate (GlcNAc-6-P). The sequence is that of Putative N-acetylmannosamine-6-phosphate 2-epimerase from Vibrio cholerae serotype O1 (strain ATCC 39541 / Classical Ogawa 395 / O395).